Here is a 124-residue protein sequence, read N- to C-terminus: Small ribosomal subunit protein uS12 (124 aa).

Position 89 is a 3-methylthioaspartic acid (aspartate 89). The interval 104–124 (TQGVKNRGQARSRYGAKKEKK) is disordered. The segment covering 111–124 (GQARSRYGAKKEKK) has biased composition (basic residues).

This sequence belongs to the universal ribosomal protein uS12 family. As to quaternary structure, part of the 30S ribosomal subunit. Contacts proteins S8 and S17. May interact with IF1 in the 30S initiation complex.

In terms of biological role, with S4 and S5 plays an important role in translational accuracy. Interacts with and stabilizes bases of the 16S rRNA that are involved in tRNA selection in the A site and with the mRNA backbone. Located at the interface of the 30S and 50S subunits, it traverses the body of the 30S subunit contacting proteins on the other side and probably holding the rRNA structure together. The combined cluster of proteins S8, S12 and S17 appears to hold together the shoulder and platform of the 30S subunit. This chain is Small ribosomal subunit protein uS12, found in Micrococcus luteus (strain ATCC 4698 / DSM 20030 / JCM 1464 / CCM 169 / CCUG 5858 / IAM 1056 / NBRC 3333 / NCIMB 9278 / NCTC 2665 / VKM Ac-2230) (Micrococcus lysodeikticus).